The sequence spans 357 residues: Protein-glutamate methylesterase/protein-glutamine glutaminase (357 aa).

The Response regulatory domain maps to 3–120 (RVLVVDDSAF…SLDLYKIKEQ (118 aa)). D54 carries the 4-aspartylphosphate modification. The 195-residue stretch at 161–355 (PGTGRQIVCI…ASITSCVKKE (195 aa)) folds into the CheB-type methylesterase domain. Catalysis depends on residues S173, H200, and D296.

This sequence belongs to the CheB family. Phosphorylated by CheA. Phosphorylation of the N-terminal regulatory domain activates the methylesterase activity.

It localises to the cytoplasm. The enzyme catalyses [protein]-L-glutamate 5-O-methyl ester + H2O = L-glutamyl-[protein] + methanol + H(+). It carries out the reaction L-glutaminyl-[protein] + H2O = L-glutamyl-[protein] + NH4(+). Its function is as follows. Involved in the modulation of the chemotaxis system; catalyzes the demethylation of specific methylglutamate residues introduced into the chemoreceptors (methyl-accepting chemotaxis proteins) by CheR. B.subtilis has an effective methylation-independent adaptation system but must utilize the methylation system for adaptation to high concentrations of attractant. This is Protein-glutamate methylesterase/protein-glutamine glutaminase from Bacillus subtilis (strain 168).